The primary structure comprises 68 residues: Beta-defensin 1 (68 aa).

The signal sequence occupies residues 1–21 (MRTSYLLLFTLCLLLSEMASG). Residues 22 to 32 (DNFLTGLGHRS) constitute a propeptide that is removed on maturation. Intrachain disulfides connect Cys37–Cys66, Cys44–Cys59, and Cys49–Cys67.

This sequence belongs to the beta-defensin family. Monomer. Homodimer.

The protein localises to the secreted. Its subcellular location is the membrane. Its function is as follows. Has bactericidal activity. May act as a ligand for C-C chemokine receptor CCR6. Positively regulates the sperm motility and bactericidal activity in a CCR6-dependent manner. Binds to CCR6 and triggers Ca2+ mobilization in the sperm which is important for its motility. This is Beta-defensin 1 (DEFB1) from Macaca mulatta (Rhesus macaque).